A 257-amino-acid chain; its full sequence is Probable S-adenosylmethionine-dependent methyltransferase MSMEG_2350/MSMEI_2290 (257 aa).

The protein belongs to the methyltransferase superfamily.

Functionally, probable S-adenosylmethionine-dependent methyltransferase required for the 6-O-methylation of the polysaccharide backbone of 6-O-methylglucosyl lipopolysaccharides (MGLP). In Mycolicibacterium smegmatis (strain ATCC 700084 / mc(2)155) (Mycobacterium smegmatis), this protein is Probable S-adenosylmethionine-dependent methyltransferase MSMEG_2350/MSMEI_2290.